Consider the following 532-residue polypeptide: Phosphoenolpyruvate carboxykinase (ATP) (532 aa).

Positions 60, 194, and 200 each coordinate substrate. Residues K200, H219, and 237-245 contribute to the ATP site; that span reads GLSGTGKTT. Residues K200 and H219 each contribute to the Mn(2+) site. Mn(2+) is bound at residue D258. The ATP site is built by E286, R324, and T449. R324 contributes to the substrate binding site.

The protein belongs to the phosphoenolpyruvate carboxykinase (ATP) family. Mn(2+) is required as a cofactor.

The protein resides in the cytoplasm. The catalysed reaction is oxaloacetate + ATP = phosphoenolpyruvate + ADP + CO2. It functions in the pathway carbohydrate biosynthesis; gluconeogenesis. Functionally, involved in the gluconeogenesis. Catalyzes the conversion of oxaloacetate (OAA) to phosphoenolpyruvate (PEP) through direct phosphoryl transfer between the nucleoside triphosphate and OAA. The chain is Phosphoenolpyruvate carboxykinase (ATP) from Ruegeria sp. (strain TM1040) (Silicibacter sp.).